We begin with the raw amino-acid sequence, 434 residues long: MDYLDLGPYSSASGTVRLPGSKSISNRVLLLAALAEGETTITNLLDSDDTRVMLDALGKLGVRLTRDADTCVVAGTRGAFTARTADLFLGNAGTAVRPLTAALAVNGGDYRVHGVPRMHERPIGDLVDGLRQIGAQIDYEQNEGFPPLRIKPAAITVDAPIRVRGDVSSQFLTALLMTLPLVKAKDGKIVVEVDGELISKPYIDITIRLMERFGVTVERDGWQRFVVPAGVRYRSPGRIMVEGDASSASYFLAAGALGGGPLRVEGVGRASIQGDVGFANALMQMGANVSMGDDWIEVRGIGHDHGKLDPIDMDFNLIPDAAMTIAVAALFASGTSTLRNIASWRVKETDRIAAMATELRKLGAVVEEGPDYLVVTPPQRLTPNATIDTYDDHRMAMCFSLVSLGGVPVRINDPKCVGKTFPDYFDRFAALAKA.

Lysine 22, serine 23, and arginine 27 together coordinate 3-phosphoshikimate. Lysine 22 is a binding site for phosphoenolpyruvate. The phosphoenolpyruvate site is built by glycine 93 and arginine 121. 3-phosphoshikimate-binding residues include serine 168, serine 169, glutamine 170, serine 199, aspartate 320, and lysine 347. Glutamine 170 serves as a coordination point for phosphoenolpyruvate. Aspartate 320 acts as the Proton acceptor in catalysis. Phosphoenolpyruvate contacts are provided by arginine 351, arginine 394, and lysine 419.

The protein belongs to the EPSP synthase family. As to quaternary structure, monomer.

It localises to the cytoplasm. The enzyme catalyses 3-phosphoshikimate + phosphoenolpyruvate = 5-O-(1-carboxyvinyl)-3-phosphoshikimate + phosphate. It functions in the pathway metabolic intermediate biosynthesis; chorismate biosynthesis; chorismate from D-erythrose 4-phosphate and phosphoenolpyruvate: step 6/7. Its function is as follows. Catalyzes the transfer of the enolpyruvyl moiety of phosphoenolpyruvate (PEP) to the 5-hydroxyl of shikimate-3-phosphate (S3P) to produce enolpyruvyl shikimate-3-phosphate and inorganic phosphate. In Burkholderia vietnamiensis (strain G4 / LMG 22486) (Burkholderia cepacia (strain R1808)), this protein is 3-phosphoshikimate 1-carboxyvinyltransferase.